The chain runs to 343 residues: Holliday junction branch migration complex subunit RuvB (343 aa).

The segment at 1–26 (MKEKILTFSSDPSSPVTRHETEEDTG) is disordered. Positions 3–193 (EKILTFSSDP…FGIFRKFDFY (191 aa)) are large ATPase domain (RuvB-L). Polar residues predominate over residues 7–16 (TFSSDPSSPV). Residues Leu-32, Arg-33, Gly-74, Lys-77, Thr-78, Thr-79, 140–142 (EDF), Arg-183, Tyr-193, and Arg-230 contribute to the ATP site. Thr-78 serves as a coordination point for Mg(2+). The interval 194–264 (SRQDLARIVS…AIDDALALEG (71 aa)) is small ATPAse domain (RuvB-S). The segment at 267 to 343 (EKGLTGLDRS…YRHLGVQWRG (77 aa)) is head domain (RuvB-H). Arg-322 and Arg-327 together coordinate DNA.

This sequence belongs to the RuvB family. In terms of assembly, homohexamer. Forms an RuvA(8)-RuvB(12)-Holliday junction (HJ) complex. HJ DNA is sandwiched between 2 RuvA tetramers; dsDNA enters through RuvA and exits via RuvB. An RuvB hexamer assembles on each DNA strand where it exits the tetramer. Each RuvB hexamer is contacted by two RuvA subunits (via domain III) on 2 adjacent RuvB subunits; this complex drives branch migration. In the full resolvosome a probable DNA-RuvA(4)-RuvB(12)-RuvC(2) complex forms which resolves the HJ.

It is found in the cytoplasm. It catalyses the reaction ATP + H2O = ADP + phosphate + H(+). The RuvA-RuvB-RuvC complex processes Holliday junction (HJ) DNA during genetic recombination and DNA repair, while the RuvA-RuvB complex plays an important role in the rescue of blocked DNA replication forks via replication fork reversal (RFR). RuvA specifically binds to HJ cruciform DNA, conferring on it an open structure. The RuvB hexamer acts as an ATP-dependent pump, pulling dsDNA into and through the RuvAB complex. RuvB forms 2 homohexamers on either side of HJ DNA bound by 1 or 2 RuvA tetramers; 4 subunits per hexamer contact DNA at a time. Coordinated motions by a converter formed by DNA-disengaged RuvB subunits stimulates ATP hydrolysis and nucleotide exchange. Immobilization of the converter enables RuvB to convert the ATP-contained energy into a lever motion, pulling 2 nucleotides of DNA out of the RuvA tetramer per ATP hydrolyzed, thus driving DNA branch migration. The RuvB motors rotate together with the DNA substrate, which together with the progressing nucleotide cycle form the mechanistic basis for DNA recombination by continuous HJ branch migration. Branch migration allows RuvC to scan DNA until it finds its consensus sequence, where it cleaves and resolves cruciform DNA. The protein is Holliday junction branch migration complex subunit RuvB of Desulfosudis oleivorans (strain DSM 6200 / JCM 39069 / Hxd3) (Desulfococcus oleovorans).